A 255-amino-acid polypeptide reads, in one-letter code: Epoxyqueuosine reductase QueH (255 aa).

[4Fe-4S] cluster contacts are provided by C44, C45, C128, and C131. The cysteines at positions 210 and 212 are disulfide-linked.

Belongs to the QueH family.

It carries out the reaction epoxyqueuosine(34) in tRNA + AH2 = queuosine(34) in tRNA + A + H2O. It participates in tRNA modification; tRNA-queuosine biosynthesis. Catalyzes the conversion of epoxyqueuosine (oQ) to queuosine (Q), which is a hypermodified base found in the wobble positions of tRNA(Asp), tRNA(Asn), tRNA(His) and tRNA(Tyr). The sequence is that of Epoxyqueuosine reductase QueH from Streptococcus pyogenes serotype M1.